The chain runs to 373 residues: 3 beta-hydroxysteroid dehydrogenase/Delta 5--&gt;4-isomerase type 4 (373 aa).

Y155 functions as the Proton acceptor in the catalytic mechanism. K159 serves as a coordination point for NAD(+). A helical membrane pass occupies residues 288-308 (LPLLYWLAFLLEIVSFFLHPV). N6-acetyllysine is present on K350.

This sequence belongs to the 3-beta-HSD family. Skin, placenta, also detectable in ovary and adrenal gland.

The protein resides in the endoplasmic reticulum membrane. Its subcellular location is the mitochondrion membrane. The enzyme catalyses a 3beta-hydroxy-Delta(5)-steroid + NAD(+) = a 3-oxo-Delta(5)-steroid + NADH + H(+). It catalyses the reaction a 3-oxo-Delta(5)-steroid = a 3-oxo-Delta(4)-steroid. It functions in the pathway lipid metabolism; steroid biosynthesis. Functionally, 3-beta-HSD is a bifunctional enzyme, that catalyzes the oxidative conversion of Delta(5)-ene-3-beta-hydroxy steroid, and the oxidative conversion of ketosteroids. The 3-beta-HSD enzymatic system plays a crucial role in the biosynthesis of all classes of hormonal steroids. This Rattus norvegicus (Rat) protein is 3 beta-hydroxysteroid dehydrogenase/Delta 5--&gt;4-isomerase type 4 (Hsd3b6).